A 75-amino-acid chain; its full sequence is Small ribosomal subunit protein bS18 (75 aa).

It belongs to the bacterial ribosomal protein bS18 family. In terms of assembly, part of the 30S ribosomal subunit. Forms a tight heterodimer with protein bS6.

Binds as a heterodimer with protein bS6 to the central domain of the 16S rRNA, where it helps stabilize the platform of the 30S subunit. This is Small ribosomal subunit protein bS18 from Psychromonas ingrahamii (strain DSM 17664 / CCUG 51855 / 37).